A 129-amino-acid chain; its full sequence is Small ribosomal subunit protein uS11 (129 aa).

It belongs to the universal ribosomal protein uS11 family. As to quaternary structure, part of the 30S ribosomal subunit. Interacts with proteins S7 and S18. Binds to IF-3.

In terms of biological role, located on the platform of the 30S subunit, it bridges several disparate RNA helices of the 16S rRNA. Forms part of the Shine-Dalgarno cleft in the 70S ribosome. This Enterobacter sp. (strain 638) protein is Small ribosomal subunit protein uS11.